The primary structure comprises 92 residues: PqqA binding protein (92 aa).

Belongs to the PqqD family. In terms of assembly, monomer. Interacts with PqqE.

Its pathway is cofactor biosynthesis; pyrroloquinoline quinone biosynthesis. Functionally, functions as a PqqA binding protein and presents PqqA to PqqE, in the pyrroloquinoline quinone (PQQ) biosynthetic pathway. This chain is PqqA binding protein, found in Pseudomonas paraeruginosa (strain DSM 24068 / PA7) (Pseudomonas aeruginosa (strain PA7)).